The chain runs to 707 residues: uncharacterized protein (707 aa).

Disordered regions lie at residues 15–122 (ALAK…LESY) and 667–707 (ESVQ…DIDE). 2 stretches are compositionally biased toward basic and acidic residues: residues 18–32 (KKND…DKGI) and 40–52 (EGKD…DVEK). Phosphoserine is present on Ser112. Residues 659-700 (EEQRKLIRESVQQDQEHKEQMRQKKKQALKSDDIELDDLSEE) are a coiled coil. Residues 692–707 (IELDDLSEEEAEDIDE) are compositionally biased toward acidic residues.

It belongs to the NOC2 family.

It localises to the nucleus. The protein localises to the nucleolus. This is an uncharacterized protein from Schizosaccharomyces pombe (strain 972 / ATCC 24843) (Fission yeast).